Reading from the N-terminus, the 921-residue chain is Ubiquitin carboxyl-terminal hydrolase 11 (921 aa).

The segment covering 1–16 has biased composition (low complexity); it reads MAAVAADPAAAAVPAS. Residues 1–29 form a disordered region; sequence MAAVAADPAAAAVPASAEDRETQPEAMPD. Residues 28–133 enclose the DUSP domain; that stretch reads PDLDQQWRQI…DQPPIERKVI (106 aa). K194 bears the N6-acetyllysine mark. In terms of domain architecture, USP spans 257-889; that stretch reads CGLTNLGNTC…AAYVLFYQRQ (633 aa). C266 functions as the Nucleophile in the catalytic mechanism. A disordered region spans residues 592–697; the sequence is TKPTSDDDDG…DRTTSPEEAQ (106 aa). S596 is modified (phosphoserine). Residues 597-624 show a composition bias toward acidic residues; sequence DDDDGDEKGDENEDEDVEDDSSSEEEKE. Polar residues-rich tracts occupy residues 657-666 and 676-697; these read LDNSLHTSQW and FTLQ…EEAQ. Position 692 is a phosphoserine (S692). H847 (proton acceptor) is an active-site residue. The tract at residues 893-921 is disordered; the sequence is RRQSQTASSETPTSPASSSTPNSDIMDVN. The segment covering 895 to 915 has biased composition (low complexity); sequence QSQTASSETPTSPASSSTPNS. S906 is subject to Phosphoserine.

This sequence belongs to the peptidase C19 family. Monomer. Associated component of the Polycomb group (PcG) multiprotein PRC1-like complex. Interacts with RANBP9/RANBPM. Interacts with BRCA2. Interacts with CHUK/IKKA. Interacts with NFKBIA. Interacts with SPRY3, RAE1, MYCBP2/PAM, and KCTD6.

It is found in the nucleus. Its subcellular location is the cytoplasm. The protein resides in the chromosome. The enzyme catalyses Thiol-dependent hydrolysis of ester, thioester, amide, peptide and isopeptide bonds formed by the C-terminal Gly of ubiquitin (a 76-residue protein attached to proteins as an intracellular targeting signal).. In terms of biological role, protease that can remove conjugated ubiquitin from target proteins and polyubiquitin chains. Inhibits the degradation of target proteins by the proteasome. Cleaves preferentially 'Lys-6' and 'Lys-63'-linked ubiquitin chains. Has lower activity with 'Lys-11' and 'Lys-33'-linked ubiquitin chains, and extremely low activity with 'Lys-27', 'Lys-29' and 'Lys-48'-linked ubiquitin chains (in vitro). Plays a role in the regulation of pathways leading to NF-kappa-B activation. Plays a role in the regulation of DNA repair after double-stranded DNA breaks. Acts as a chromatin regulator via its association with the Polycomb group (PcG) multiprotein PRC1-like complex; may act by deubiquitinating components of the PRC1-like comple. Promotes cell proliferation by deubiquitinating phosphorylated E2F1x. This is Ubiquitin carboxyl-terminal hydrolase 11 from Rattus norvegicus (Rat).